The chain runs to 429 residues: Glutamate-1-semialdehyde 2,1-aminomutase (429 aa).

N6-(pyridoxal phosphate)lysine is present on Lys-267.

This sequence belongs to the class-III pyridoxal-phosphate-dependent aminotransferase family. HemL subfamily. In terms of assembly, homodimer. Pyridoxal 5'-phosphate is required as a cofactor.

The protein localises to the cytoplasm. The enzyme catalyses (S)-4-amino-5-oxopentanoate = 5-aminolevulinate. Its pathway is porphyrin-containing compound metabolism; protoporphyrin-IX biosynthesis; 5-aminolevulinate from L-glutamyl-tRNA(Glu): step 2/2. The protein is Glutamate-1-semialdehyde 2,1-aminomutase of Stenotrophomonas maltophilia (strain R551-3).